Reading from the N-terminus, the 245-residue chain is 1-(5-phosphoribosyl)-5-[(5-phosphoribosylamino)methylideneamino] imidazole-4-carboxamide isomerase (245 aa).

Residue aspartate 7 is the Proton acceptor of the active site. Aspartate 129 (proton donor) is an active-site residue.

Belongs to the HisA/HisF family.

The protein localises to the cytoplasm. The enzyme catalyses 1-(5-phospho-beta-D-ribosyl)-5-[(5-phospho-beta-D-ribosylamino)methylideneamino]imidazole-4-carboxamide = 5-[(5-phospho-1-deoxy-D-ribulos-1-ylimino)methylamino]-1-(5-phospho-beta-D-ribosyl)imidazole-4-carboxamide. It functions in the pathway amino-acid biosynthesis; L-histidine biosynthesis; L-histidine from 5-phospho-alpha-D-ribose 1-diphosphate: step 4/9. In Escherichia coli O9:H4 (strain HS), this protein is 1-(5-phosphoribosyl)-5-[(5-phosphoribosylamino)methylideneamino] imidazole-4-carboxamide isomerase.